Consider the following 49-residue polypeptide: Large ribosomal subunit protein bL33A (49 aa).

The tract at residues 21-49 is disordered; it reads KNKRNNPERVEMKKYCSRDNKHTLHRETK. The span at 25–49 shows a compositional bias: basic and acidic residues; sequence NNPERVEMKKYCSRDNKHTLHRETK.

Belongs to the bacterial ribosomal protein bL33 family.

In Staphylococcus epidermidis (strain ATCC 35984 / DSM 28319 / BCRC 17069 / CCUG 31568 / BM 3577 / RP62A), this protein is Large ribosomal subunit protein bL33A.